Reading from the N-terminus, the 413-residue chain is Serine/threonine transporter SstT (413 aa).

Helical transmembrane passes span 22–42 (GLLLGLLLALIAPSLQGVLGF), 61–81 (AVAPILVFLLVISAIANKQLG), 89–109 (IVVLYLLGTFLAALTSVLFSF), 148–168 (ALFNANFIGILFWAIGLGIAL), 189–209 (IVHFIISFAPIGVFGLVAETL), 224–244 (LVVLIGSMLFTAFVINPILVF), 305–325 (MAGAAITITVLTLAAVHTLGI), 337–357 (VVASICACGASGVAGGSLLLI), and 363–383 (LFGIPNDIAAQVIGVGFVIGV).

The protein belongs to the dicarboxylate/amino acid:cation symporter (DAACS) (TC 2.A.23) family.

It localises to the cell inner membrane. The catalysed reaction is L-serine(in) + Na(+)(in) = L-serine(out) + Na(+)(out). It catalyses the reaction L-threonine(in) + Na(+)(in) = L-threonine(out) + Na(+)(out). In terms of biological role, involved in the import of serine and threonine into the cell, with the concomitant import of sodium (symport system). This chain is Serine/threonine transporter SstT, found in Histophilus somni (strain 129Pt) (Haemophilus somnus).